A 422-amino-acid chain; its full sequence is Zinc finger protein zfp-2 (422 aa).

The disordered stretch occupies residues 95–119 (AIPCTSSSMQPSTSSNPSSGEHQPV). Low complexity predominate over residues 99–113 (TSSSMQPSTSSNPSS). C2H2-type zinc fingers lie at residues 171–194 (YRCTNCKTYFGNKEVYQRHIQEVH), 200–222 (FRCFNCGMRFANKTSMTHHLKDH), 229–251 (FSCDYCPRIFSKLESKTRHHKMH), 255–278 (STCQTCMRFFTTEDALRHHQSTAH), 300–322 (YSCSYCNLRFHFKKDMLVHERIH), 328–350 (YSCGYCMKSFAQSQALTAHIRTH), and 356–379 (YGCGKCDKRFRDNSCLRKHELAAH).

Expressed in vulval cells and all somatic gonad structures such as spermatheca, sheath cells, uterine cells and distal tip cells.

The protein resides in the nucleus. Its function is as follows. Probable zinc finger transcription factor that acts as a transcriptional repressor. Acts redundantly with the transcriptional repressor lin-35 to control the development of somatic gonad lineages. May, in addition, suppress sensitivity to RNAi. The sequence is that of Zinc finger protein zfp-2 from Caenorhabditis elegans.